The chain runs to 930 residues: Isoleucine--tRNA ligase (930 aa).

Positions 57 to 67 (PYANGNIHVGH) match the 'HIGH' region motif. Glu554 contributes to the L-isoleucyl-5'-AMP binding site. Positions 595 to 599 (KMSKS) match the 'KMSKS' region motif. Lys598 provides a ligand contact to ATP. Residues Cys888, Cys891, Cys908, and Cys911 each coordinate Zn(2+).

It belongs to the class-I aminoacyl-tRNA synthetase family. IleS type 1 subfamily. As to quaternary structure, monomer. Zn(2+) is required as a cofactor.

The protein localises to the cytoplasm. It catalyses the reaction tRNA(Ile) + L-isoleucine + ATP = L-isoleucyl-tRNA(Ile) + AMP + diphosphate. Its function is as follows. Catalyzes the attachment of isoleucine to tRNA(Ile). As IleRS can inadvertently accommodate and process structurally similar amino acids such as valine, to avoid such errors it has two additional distinct tRNA(Ile)-dependent editing activities. One activity is designated as 'pretransfer' editing and involves the hydrolysis of activated Val-AMP. The other activity is designated 'posttransfer' editing and involves deacylation of mischarged Val-tRNA(Ile). The sequence is that of Isoleucine--tRNA ligase from Streptococcus pneumoniae (strain ATCC 700669 / Spain 23F-1).